Consider the following 588-residue polypeptide: Adenine deaminase (588 aa).

This sequence belongs to the metallo-dependent hydrolases superfamily. Adenine deaminase family. Requires Mn(2+) as cofactor.

The catalysed reaction is adenine + H2O + H(+) = hypoxanthine + NH4(+). This chain is Adenine deaminase, found in Desulforamulus reducens (strain ATCC BAA-1160 / DSM 100696 / MI-1) (Desulfotomaculum reducens).